We begin with the raw amino-acid sequence, 239 residues long: Ureidoacrylate amidohydrolase RutB (239 aa).

Residue Asp35 is the Proton acceptor of the active site. The active site involves Lys144. Catalysis depends on Cys177, which acts as the Nucleophile.

Belongs to the isochorismatase family. RutB subfamily.

It catalyses the reaction (Z)-3-ureidoacrylate + H2O + H(+) = (Z)-3-aminoacrylate + NH4(+) + CO2. The catalysed reaction is (Z)-3-ureidoacrylate + H2O = (Z)-3-aminoacrylate + carbamate + H(+). It carries out the reaction (Z)-2-methylureidoacrylate + H2O + H(+) = (Z)-2-methylaminoacrylate + NH4(+) + CO2. In terms of biological role, hydrolyzes ureidoacrylate to form aminoacrylate and carbamate. The carbamate hydrolyzes spontaneously, thereby releasing one of the nitrogen atoms of the pyrimidine ring as ammonia and one of its carbon atoms as CO2. The protein is Ureidoacrylate amidohydrolase RutB of Caulobacter segnis (strain ATCC 21756 / DSM 7131 / JCM 7823 / NBRC 15250 / LMG 17158 / TK0059) (Mycoplana segnis).